Here is a 166-residue protein sequence, read N- to C-terminus: MHSSSPFYISNGNKIFFYINLGGVMNMTISFLSEHIFIKLVILTISFDTLLGCLSAIKSRKFNSSFGIDGGIRKVAMIACIFFLSVVDILTKFNFLFMLPQDCINFLRLKHLGISEFFSILFILYESVSILKNMCLCGLPVPKRLKEKIAILLDAMTDEMNAKDEK.

4 helical membrane passes run Ile15–His35, Ile36–Ala56, Met77–Phe97, and His111–Leu131.

Belongs to the bacteriophage holin family. In terms of assembly, homomultimer.

It localises to the cell membrane. Functionally, holin-like protein required for secretion of toxins A and B (TcdA and TcdB). Facilitates the release of toxins to the extracellular environment without causing the bacterial cell lysis. Has weak activity, suggesting that it may act as a antiholin when multiple forms are produced. The chain is Holin-like protein TcdE from Clostridioides difficile (Peptoclostridium difficile).